The primary structure comprises 481 residues: Bindin (481 aa).

The first 20 residues, 1 to 20, serve as a signal peptide directing secretion; the sequence is MGFHQILVTVVALALASVRA. A propeptide spanning residues 21–245 is cleaved from the precursor; that stretch reads EFPSRTDSPT…DSKRGARKKR (225 aa). Basic and acidic residues-rich tracts occupy residues 154-163 and 178-189; these read DGDLRKRRES and RKGDEPAGHTLK. Disordered stretches follow at residues 154–193 and 219–243; these read DGDLRKRRESEDVDDDDVSKRASPRKGDEPAGHTLKDLAP and GHSPTRRATDNDAAVSDDSKRGARK. Positions 352–360 are fucose-binding domain; it reads LRHLRHHSN. The tract at residues 376 to 481 is disordered; the sequence is SAMQEEEEEE…QPYGQGYLQG (106 aa). Positions 379-389 are enriched in acidic residues; that stretch reads QEEEEEEEEDA. Over residues 406–416 the composition is skewed to gly residues; that stretch reads AGFGGGGGGGA. 2 stretches are compositionally biased toward low complexity: residues 417 to 440 and 464 to 481; these read MMSPQQMGGQPQGMIGQPQGMGFP and GMGMPPQGQPYGQGYLQG.

The protein belongs to the bindin family.

The protein resides in the cytoplasmic vesicle. Its subcellular location is the secretory vesicle. It localises to the acrosome lumen. Its function is as follows. Species-specific sea urchin sperm protein required for adhesion of sperm to the egg surface during fertilization. Bindin coats the acrosomal process after it is externalized by the acrosome reaction. It binds to sulfated, fucose-containing polysaccharides on the vitelline layer receptor proteoglycans which cover the egg plasma membrane. The protein is Bindin of Strongylocentrotus purpuratus (Purple sea urchin).